We begin with the raw amino-acid sequence, 518 residues long: Zinc finger protein 449 (518 aa).

In terms of domain architecture, SCAN box spans 30 to 112; the sequence is RQRFRQFQYR…SLIEDLQREL (83 aa). A compositionally biased stretch (polar residues) spans 292-304; sequence NPTLGETPENSNL. Positions 292–325 are disordered; it reads NPTLGETPENSNLEEPLNPKPHKKKSPGEKPHRC. C2H2-type zinc fingers lie at residues 323–345, 351–373, 379–401, 407–429, 435–457, 463–485, and 491–513; these read HRCP…QRIH, HKCP…QRLH, YECT…QRTH, YKCL…LKTH, HRCH…QRTH, FKCN…LRIH, and YKCT…QVTH.

It belongs to the krueppel C2H2-type zinc-finger protein family.

It is found in the nucleus. Its function is as follows. May be involved in transcriptional regulation. The chain is Zinc finger protein 449 (ZNF449) from Pan troglodytes (Chimpanzee).